Here is a 774-residue protein sequence, read N- to C-terminus: Dapper homolog 2 (774 aa).

A coiled-coil region spans residues 67 to 93 (PEQQLEAALAALQEQLSRLRQQDIGLK). 4 disordered regions span residues 188 to 225 (RPQA…LDRA), 295 to 319 (TPQR…TIQT), 345 to 500 (TPAK…EKIK), and 624 to 710 (CPES…GAQS). Residues 438–452 (VQASPSSKAQQTPSA) are compositionally biased toward polar residues. Residues 637 to 648 (RRAGGPLARGRP) are compositionally biased toward low complexity. 2 stretches are compositionally biased toward basic and acidic residues: residues 655 to 672 (AYTR…ECDP) and 686 to 700 (SSDH…RESS). A PDZ-binding motif is present at residues 771 to 774 (MTMV).

It belongs to the dapper family. In terms of assembly, can form homodimers and heterodimers with DACT1 or DACT3. Interacts with CSNK1D, PKA catalytic subunit, PKC-type kinase, CSNK2B, DVL1, DVL2, DVL3, VANGL1, VANGL2, TGFBR1, CTNNB1, CTNND2, CTNND1, LEF1, TCF7, TCF7L1 and HDAC1.

Functionally, involved in regulation of intracellular signaling pathways during development. Negatively regulates the Nodal signaling pathway, possibly by promoting the lysosomal degradation of Nodal receptors, such as TGFBR1. May be involved in control of the morphogenetic behavior of kidney ureteric bud cells by keeping cells epithelial and restraining their mesenchymal character. May play an inhibitory role in the re-epithelialization of skin wounds by attenuating TGF-beta signaling. This chain is Dapper homolog 2 (DACT2), found in Homo sapiens (Human).